A 162-amino-acid polypeptide reads, in one-letter code: uncharacterized protein (162 aa).

The signal sequence occupies residues 1 to 34; the sequence is MRKKNNIKKWLLIIAGFLIICIITLFVMVSGNKV.

This is an uncharacterized protein from Bacillus subtilis (strain 168).